The following is a 96-amino-acid chain: MAEVEETLKRIQSHKGVIGTMVVNAEGIPIRTTLDNSTTVQYAGLLHHLTMKAKSTVRDIDPQNDLTFLRIRSKKHEIMVAPDKEYLLIVIQNPCE.

Position 2 is an N-acetylalanine (Ala-2).

It belongs to the GAMAD family. Homodimer. The cytoplasmic dynein 1 complex consists of two catalytic heavy chains (HCs) and a number of non-catalytic subunits presented by intermediate chains (ICs), light intermediate chains (LICs) and light chains (LCs); the composition seems to vary in respect to the IC, LIC and LC composition. The heavy chain homodimer serves as a scaffold for the probable homodimeric assembly of the respective non-catalytic subunits. The ICs and LICs bind directly to the HC dimer and the LCs assemble on the IC dimer. Interacts with DYNC1I1 and DYNC1I2. Self-associates. Interacts with DYNLRB1. High expression in heart, brain, placenta, skeletal muscle, prostate and small intestine; moderate in kidney, pancreas, spleen, testis, ovary and colon; low in lung, liver, thymus and leukocyte.

The protein localises to the cytoplasm. It localises to the cytoskeleton. Acts as one of several non-catalytic accessory components of the cytoplasmic dynein 1 complex that are thought to be involved in linking dynein to cargos and to adapter proteins that regulate dynein function. Cytoplasmic dynein 1 acts as a motor for the intracellular retrograde motility of vesicles and organelles along microtubules. The protein is Dynein light chain roadblock-type 2 (DYNLRB2) of Homo sapiens (Human).